The sequence spans 346 residues: Annexin A1 (346 aa).

Residue Ser5 is modified to Phosphoserine; by TRPM7. Gln19 participates in a covalent cross-link: Isoglutamyl lysine isopeptide (Gln-Lys) (interchain with K-?). Residue Tyr21 is modified to Phosphotyrosine; by EGFR. At Ser27 the chain carries Phosphoserine; by PKC. A phosphoserine mark is found at Ser34 and Ser37. 4 Annexin repeats span residues 42–113, 114–185, 197–269, and 273–344; these read FDAS…ALLK, TPAQ…SLAK, DLAD…AIVK, and STPA…ALCG. Lys58 bears the N6-acetyllysine mark. Ca(2+) is bound by residues Gly59, Val60, Glu62, Lys97, Leu100, Glu105, Met127, Gly129, Gly131, Thr132, and Glu134. A Phosphothreonine modification is found at Thr136. Positions 171, 210, and 213 each coordinate Ca(2+). Lys214 is covalently cross-linked (Glycyl lysine isopeptide (Lys-Gly) (interchain with G-Cter in SUMO1); alternate). A Glycyl lysine isopeptide (Lys-Gly) (interchain with G-Cter in SUMO2); alternate cross-link involves residue Lys214. Residue Gly215 coordinates Ca(2+). N6-acetyllysine is present on Lys239. Residues Asp253, Glu255, and Leu256 each coordinate Ca(2+). Residue Lys257 forms a Glycyl lysine isopeptide (Lys-Gly) (interchain with G-Cter in SUMO1) linkage. Positions 261, 286, 288, and 290 each coordinate Ca(2+). Lys312 carries the post-translational modification N6-acetyllysine. The cysteines at positions 324 and 343 are disulfide-linked. Positions 328, 330, and 331 each coordinate Ca(2+). Lys332 is covalently cross-linked (Glycyl lysine isopeptide (Lys-Gly) (interchain with G-Cter in SUMO1)). Glu336 lines the Ca(2+) pocket.

Belongs to the annexin family. In terms of assembly, homodimer; non-covalently linked. Homodimer; linked by transglutamylation. Homodimers linked by transglutamylation are observed in placenta, but not in other tissues. Interacts with S100A11. Heterotetramer, formed by two molecules each of S100A11 and ANXA1. Interacts with DYSF. Interacts with EGFR. Post-translationally, phosphorylated by protein kinase C, EGFR and TRPM7. Phosphorylated in response to EGF treatment. In terms of processing, sumoylated. Proteolytically cleaved by cathepsin CTSG to release the active N-terminal peptide Ac2-26.

It localises to the nucleus. The protein localises to the cytoplasm. It is found in the cell projection. The protein resides in the cilium. Its subcellular location is the basolateral cell membrane. It localises to the lateral cell membrane. The protein localises to the cell membrane. It is found in the apical cell membrane. The protein resides in the membrane. Its subcellular location is the endosome membrane. It localises to the secreted. The protein localises to the extracellular space. It is found in the early endosome. The protein resides in the cytoplasmic vesicle membrane. Its subcellular location is the extracellular exosome. It localises to the cytoplasmic vesicle. The protein localises to the secretory vesicle lumen. It is found in the phagocytic cup. Its function is as follows. Plays important roles in the innate immune response as effector of glucocorticoid-mediated responses and regulator of the inflammatory process. Has anti-inflammatory activity. Plays a role in glucocorticoid-mediated down-regulation of the early phase of the inflammatory response. Contributes to the adaptive immune response by enhancing signaling cascades that are triggered by T-cell activation, regulates differentiation and proliferation of activated T-cells. Promotes the differentiation of T-cells into Th1 cells and negatively regulates differentiation into Th2 cells. Has no effect on unstimulated T-cells. Negatively regulates hormone exocytosis via activation of the formyl peptide receptors and reorganization of the actin cytoskeleton. Has high affinity for Ca(2+) and can bind up to eight Ca(2+) ions. Displays Ca(2+)-dependent binding to phospholipid membranes. Plays a role in the formation of phagocytic cups and phagosomes. Plays a role in phagocytosis by mediating the Ca(2+)-dependent interaction between phagosomes and the actin cytoskeleton. Functions at least in part by activating the formyl peptide receptors and downstream signaling cascades. Promotes chemotaxis of granulocytes and monocytes via activation of the formyl peptide receptors. Promotes rearrangement of the actin cytoskeleton, cell polarization and cell migration. Promotes resolution of inflammation and wound healing. Acts via neutrophil N-formyl peptide receptors to enhance the release of CXCL2. This is Annexin A1 (ANXA1) from Cavia cutleri (Guinea pig).